Here is a 356-residue protein sequence, read N- to C-terminus: Heat-inducible transcription repressor HrcA (356 aa).

The protein belongs to the HrcA family.

In terms of biological role, negative regulator of class I heat shock genes (grpE-dnaK-dnaJ and groELS operons). Prevents heat-shock induction of these operons. The sequence is that of Heat-inducible transcription repressor HrcA from Chelativorans sp. (strain BNC1).